Reading from the N-terminus, the 568-residue chain is Autophagy-related protein 17 (568 aa).

Disordered stretches follow at residues 1 to 59 and 522 to 568; these read MASF…DSSE and SYEM…ERPF. Over residues 522 to 546 the composition is skewed to basic and acidic residues; it reads SYEMEAHGEPENEGKVETAYERETE.

This sequence belongs to the ATG17 family.

The protein localises to the cytoplasm. The protein resides in the preautophagosomal structure membrane. Autophagy-specific protein that functions in response to autophagy-inducing signals as a scaffold to recruit other ATG proteins to organize pre-autophagosomal structure (PAS) formation. Modulates the timing and magnitude of the autophagy response, such as the size of the sequestering vesicles. Plays particularly a role in pexophagy and nucleophagy. The chain is Autophagy-related protein 17 (apg-9) from Neurospora crassa (strain ATCC 24698 / 74-OR23-1A / CBS 708.71 / DSM 1257 / FGSC 987).